A 390-amino-acid polypeptide reads, in one-letter code: Scoulerine-9-O-methyltransferase 1 (390 aa).

Position 153 (Glu153) interacts with substrate. Residues Met207, Ser211, Gly235, Asp258, 278–279 (DM), and Lys292 each bind S-adenosyl-L-methionine. The Proton acceptor role is filled by His296. Substrate is bound at residue 296-297 (HD).

This sequence belongs to the class I-like SAM-binding methyltransferase superfamily. Cation-independent O-methyltransferase family. COMT subfamily. As to quaternary structure, homodimer. As to expression, highly expressed in capsules. Expressed is stems. Expressed at low levels in roots.

It catalyses the reaction (S)-scoulerine + S-adenosyl-L-methionine = (S)-tetrahydrocolumbamine + S-adenosyl-L-homocysteine + H(+). It carries out the reaction (S)-tetrahydrocolumbamine + S-adenosyl-L-methionine = (S)-tetrahydropalmatine + S-adenosyl-L-homocysteine + H(+). The enzyme catalyses (S)-norreticuline + S-adenosyl-L-methionine = (S)-norcodamine + S-adenosyl-L-homocysteine + H(+). The catalysed reaction is (S)-reticuline + S-adenosyl-L-methionine = (S)-codamine + S-adenosyl-L-homocysteine + H(+). It participates in alkaloid biosynthesis. Its function is as follows. Methyltransferase involved in the biosynthesis of the benzylisoquinoline alkaloid noscapine. Catalyzes the conversion of (S)-scoulerine to (S)-tetrahydrocolumbamine. Can convert (S)-tetrahydrocolumbamine to tetrahydropalmatine. Can convert (S)-norreticuline to (S)-norcodamine. Can convert (S)-reticuline to (S)-codamine. Substrate preference is (S)-scoulerine &gt; (S)-tetrahydrocolumbamine &gt; (S)-norreticuline &gt; (S)-reticuline. The chain is Scoulerine-9-O-methyltransferase 1 from Papaver somniferum (Opium poppy).